We begin with the raw amino-acid sequence, 138 residues long: Small ribosomal subunit protein uS8c (138 aa).

Belongs to the universal ribosomal protein uS8 family. In terms of assembly, part of the 30S ribosomal subunit.

Its subcellular location is the plastid. It is found in the chloroplast. In terms of biological role, one of the primary rRNA binding proteins, it binds directly to 16S rRNA central domain where it helps coordinate assembly of the platform of the 30S subunit. The sequence is that of Small ribosomal subunit protein uS8c (rps8) from Oenothera elata subsp. hookeri (Hooker's evening primrose).